The sequence spans 246 residues: Chemokine-binding protein (246 aa).

A compositionally biased stretch (polar residues) spans 108 to 125 (SESSDGNTVNTRLSSVSP). Residues 108–132 (SESSDGNTVNTRLSSVSPGQGKDSP) are disordered.

Belongs to the orthopoxvirus OPG001 family.

Its subcellular location is the secreted. Functionally, inhibits host immune defense by binding to host chemokines. Binds host CC chemokines (beta chemokines) such as RANTES with high affinity, but not CXC or C chemokines (alpha and gamma chemokines). The chain is Chemokine-binding protein (OPG001) from Monkeypox virus.